A 211-amino-acid chain; its full sequence is Ribosomal RNA small subunit methyltransferase G (211 aa).

S-adenosyl-L-methionine contacts are provided by residues Gly-72, Phe-77, 125 to 126, and Arg-141; that span reads IE.

It belongs to the methyltransferase superfamily. RNA methyltransferase RsmG family.

The protein localises to the cytoplasm. It carries out the reaction guanosine(527) in 16S rRNA + S-adenosyl-L-methionine = N(7)-methylguanosine(527) in 16S rRNA + S-adenosyl-L-homocysteine. Its function is as follows. Specifically methylates the N7 position of guanine in position 527 of 16S rRNA. This chain is Ribosomal RNA small subunit methyltransferase G, found in Allorhizobium ampelinum (strain ATCC BAA-846 / DSM 112012 / S4) (Agrobacterium vitis (strain S4)).